Here is a 438-residue protein sequence, read N- to C-terminus: Trigger factor (438 aa).

In terms of domain architecture, PPIase FKBP-type spans 163–249; sequence EDFVLIDYEG…LKEIRKQILP (87 aa).

The protein belongs to the FKBP-type PPIase family. Tig subfamily.

The protein localises to the cytoplasm. The catalysed reaction is [protein]-peptidylproline (omega=180) = [protein]-peptidylproline (omega=0). Functionally, involved in protein export. Acts as a chaperone by maintaining the newly synthesized protein in an open conformation. Functions as a peptidyl-prolyl cis-trans isomerase. This is Trigger factor from Desulfatibacillum aliphaticivorans.